The following is a 217-amino-acid chain: Large ribosomal subunit protein uL3 (217 aa).

A disordered region spans residues 127 to 162 (GFSRGPMSHGSKNHRAPGSTGAGTTPGRIYPGKRMA). A compositionally biased stretch (low complexity) spans 142-153 (APGSTGAGTTPG).

Belongs to the universal ribosomal protein uL3 family. Part of the 50S ribosomal subunit. Forms a cluster with proteins L14 and L19.

Functionally, one of the primary rRNA binding proteins, it binds directly near the 3'-end of the 23S rRNA, where it nucleates assembly of the 50S subunit. In Prochlorococcus marinus (strain MIT 9301), this protein is Large ribosomal subunit protein uL3.